Here is a 135-residue protein sequence, read N- to C-terminus: Small ribosomal subunit protein uS11 (135 aa).

The protein belongs to the universal ribosomal protein uS11 family. Part of the 30S ribosomal subunit. Interacts with proteins S7 and S18. Binds to IF-3.

In terms of biological role, located on the platform of the 30S subunit, it bridges several disparate RNA helices of the 16S rRNA. Forms part of the Shine-Dalgarno cleft in the 70S ribosome. This is Small ribosomal subunit protein uS11 from Polynucleobacter necessarius subsp. necessarius (strain STIR1).